Consider the following 319-residue polypeptide: Methionyl-tRNA formyltransferase (319 aa).

Residue 116–119 (SLLP) participates in (6S)-5,6,7,8-tetrahydrofolate binding.

It belongs to the Fmt family.

It catalyses the reaction L-methionyl-tRNA(fMet) + (6R)-10-formyltetrahydrofolate = N-formyl-L-methionyl-tRNA(fMet) + (6S)-5,6,7,8-tetrahydrofolate + H(+). In terms of biological role, attaches a formyl group to the free amino group of methionyl-tRNA(fMet). The formyl group appears to play a dual role in the initiator identity of N-formylmethionyl-tRNA by promoting its recognition by IF2 and preventing the misappropriation of this tRNA by the elongation apparatus. The protein is Methionyl-tRNA formyltransferase of Treponema pallidum (strain Nichols).